The sequence spans 148 residues: Large ribosomal subunit protein bL9 (148 aa).

This sequence belongs to the bacterial ribosomal protein bL9 family.

Binds to the 23S rRNA. This chain is Large ribosomal subunit protein bL9, found in Caldicellulosiruptor saccharolyticus (strain ATCC 43494 / DSM 8903 / Tp8T 6331).